We begin with the raw amino-acid sequence, 322 residues long: Interferon regulatory factor 1 (322 aa).

A DNA-binding region (IRF tryptophan pentad repeat) is located at residues 5–113 (RMRMRPWLEM…SAVRVYRMLP (109 aa)). At Lys-78 the chain carries N6-acetyllysine. The segment at 92 to 164 (EEVKDQSRNK…STLPDDHSSY (73 aa)) is disordered. Residues 141–157 (GESSPDTFSDGLSSSTL) are compositionally biased toward polar residues. Glycyl lysine isopeptide (Lys-Gly) (interchain with G-Cter in SUMO) cross-links involve residues Lys-276 and Lys-296.

It belongs to the IRF family. Monomer. Homodimer. Interacts with EP300. Interacts with MYD88. Interacts with PIAS3. Interacts with SPOP. Post-translationally, phosphorylated by CK2 and this positively regulates its activity. Sumoylation represses the transcriptional activity and displays enhanced resistance to protein degradation. Sumoylated by UBE2I/UBC9 and SUMO1. Inactivates the tumor suppressor activity. Elevated levels in tumor cells. Major site is Lys-276. Sumoylation is enhanced by PIAS3. Desumoylated by SENP1 in tumor cells and appears to compete with ubiquitination on C-terminal sites. In terms of processing, ubiquitinated in a SPOP-depedent manner. Appears to compete with sumoylation on C-terminal sites.

It is found in the nucleus. It localises to the cytoplasm. Activated by MYD88. Its function is as follows. Transcriptional regulator which displays a remarkable functional diversity in the regulation of cellular responses. Regulates transcription of IFN and IFN-inducible genes, host response to viral and bacterial infections, regulation of many genes expressed during hematopoiesis, inflammation, immune responses and cell proliferation and differentiation, regulation of the cell cycle and induction of growth arrest and programmed cell death following DNA damage. Stimulates both innate and acquired immune responses through the activation of specific target genes and can act as a transcriptional activator and repressor regulating target genes by binding to an interferon-stimulated response element (ISRE) in their promoters. Has an essentail role in IFNG-dependent immunity to mycobacteria. Binds to a consensus sequence in gene promoters. Its target genes for transcriptional activation activity include: genes involved in anti-viral response, such as IFN-alpha/beta, RIGI, TNFSF10/TRAIL, ZBP1, OAS1/2, PIAS1/GBP, EIF2AK2/PKR and RSAD2/viperin; antibacterial response, such as GBP2, GBP5 and NOS2/INOS; anti-proliferative response, such as p53/TP53, LOX and CDKN1A; apoptosis, such as BBC3/PUMA, CASP1, CASP7 and CASP8; immune response, such as IL7, IL12A/B and IL15, PTGS2/COX2 and CYBB; DNA damage responses and DNA repair, such as POLQ/POLH; MHC class I expression, such as TAP1, PSMB9/LMP2, PSME1/PA28A, PSME2/PA28B and B2M and MHC class II expression, such as CIITA; metabolic enzymes, such as ACOD1/IRG1. Represses genes involved in anti-proliferative response, such as BIRC5/survivin, CCNB1, CCNE1, CDK1, CDK2 and CDK4 and in immune response, such as FOXP3, IL4, ANXA2 and TLR4. Stimulates p53/TP53-dependent transcription through enhanced recruitment of EP300 leading to increased acetylation of p53/TP53. Plays an important role in immune response directly affecting NK maturation and activity, macrophage production of IL12, Th1 development and maturation of CD8+ T-cells. Also implicated in the differentiation and maturation of dendritic cells and in the suppression of regulatory T (Treg) cells development. Acts as a tumor suppressor and plays a role not only in antagonism of tumor cell growth but also in stimulating an immune response against tumor cells. The protein is Interferon regulatory factor 1 (IRF1) of Sus scrofa (Pig).